A 490-amino-acid chain; its full sequence is Cyclin-T1-3 (490 aa).

2 disordered regions span residues 275 to 391 (RVAP…GDVA) and 414 to 490 (AAED…RLRS). Composition is skewed to polar residues over residues 282–298 (QGNDTEGSSASVVNQRA) and 352–365 (TANSNEGPNMSSTM). Composition is skewed to basic and acidic residues over residues 367-391 (AMKKIDKDKVKAALEKRRKSKGDVA) and 457-490 (QEYRSPELDNRKRKDMHEHRNYDRGERDLKRLRS).

Belongs to the cyclin family. Cyclin T subfamily.

The protein is Cyclin-T1-3 (CYCT1-3) of Oryza sativa subsp. japonica (Rice).